We begin with the raw amino-acid sequence, 136 residues long: Holo-[acyl-carrier-protein] synthase (136 aa).

Positions 8 and 58 each coordinate Mg(2+).

It belongs to the P-Pant transferase superfamily. AcpS family. The cofactor is Mg(2+).

It is found in the cytoplasm. It carries out the reaction apo-[ACP] + CoA = holo-[ACP] + adenosine 3',5'-bisphosphate + H(+). In terms of biological role, transfers the 4'-phosphopantetheine moiety from coenzyme A to a Ser of acyl-carrier-protein. This is Holo-[acyl-carrier-protein] synthase from Leuconostoc mesenteroides subsp. mesenteroides (strain ATCC 8293 / DSM 20343 / BCRC 11652 / CCM 1803 / JCM 6124 / NCDO 523 / NBRC 100496 / NCIMB 8023 / NCTC 12954 / NRRL B-1118 / 37Y).